A 1169-amino-acid chain; its full sequence is Chromosome partition protein Smc (1169 aa).

P32 to N39 lines the ATP pocket. Coiled coils occupy residues I170–E265 and I307–N481. Residues D525 to E620 form the SMC hinge domain. 2 coiled-coil regions span residues A656–A914 and R985–A1014.

It belongs to the SMC family. As to quaternary structure, homodimer.

It localises to the cytoplasm. Functionally, required for chromosome condensation and partitioning. In Methylococcus capsulatus (strain ATCC 33009 / NCIMB 11132 / Bath), this protein is Chromosome partition protein Smc.